The following is a 305-amino-acid chain: Insulin-like peptide (305 aa).

The N-terminal stretch at 1 to 22 (MNLSSVYVLASLAVVCLLVKET) is a signal peptide. Cystine bridges form between cysteine 28–cysteine 87, cysteine 40–cysteine 100, and cysteine 86–cysteine 91. Positions 52–76 (SVSKRAIDFISEQQAKDYMGAMPHI) are cleaved as a propeptide — connecting peptide. The interval 102 to 114 (PYSTAPATATPVR) is d. Residues 102–305 (PYSTAPATAT…RDSYHLTELR (204 aa)) constitute a propeptide, d/E peptide. Low complexity predominate over residues 107-118 (PATATPVRTTEP). Disordered stretches follow at residues 107–130 (PATA…PLDG) and 236–305 (HNQT…TELR). An e region spans residues 115 to 305 (TTEPQPEEAE…RDSYHLTELR (191 aa)). Residues 119 to 128 (QPEEAEDDPL) show a composition bias toward acidic residues. Basic and acidic residues-rich tracts occupy residues 236–245 (HNQTDKKEPT) and 291–305 (RRIE…TELR).

Belongs to the insulin family.

Its subcellular location is the secreted. In Branchiostoma californiense (California lancelet), this protein is Insulin-like peptide (ILP).